Reading from the N-terminus, the 328-residue chain is Mitochondrial GTPase 1 (328 aa).

Positions Asn23 to Pro211 constitute a CP-type G domain. GTP contacts are provided by residues Asn70 to Asp73, Asn155 to Ser160, and Gly207.

It belongs to the TRAFAC class YlqF/YawG GTPase family. MTG1 subfamily.

The protein localises to the mitochondrion inner membrane. Mitochondrial GTPase involved in assembly of the large ribosomal subunit. Plays a role in expression of the mitochondrial translational machinery. This chain is Mitochondrial GTPase 1 (mtg1), found in Schizosaccharomyces pombe (strain 972 / ATCC 24843) (Fission yeast).